A 266-amino-acid polypeptide reads, in one-letter code: MVKVTFNSALAQKEAKKDEPKSSEEALIVPPDAVAVDCKDPGDVVPVGQRRAWCWCMCFGLAFMLAGVILGGAYLYKYFALQPDDVYYCGLKYIKDDVILNEPSADAPAARYQTIEENIKIFEEDAVEFISVPVPEFADSDPANIVHDFNKKLTAYLDLNLDKCYVIPLNTSIVMPPKNLLELLINIKAGTYLPQSYLIHEHMVITDRIENVDNLGFFIYRLCHDKETYKLQRRETIRGIQKREASNCFTIRHFENKFAVETLICS.

The Cytoplasmic segment spans residues 1-54 (MVKVTFNSALAQKEAKKDEPKSSEEALIVPPDAVAVDCKDPGDVVPVGQRRAWC). The chain crosses the membrane as a helical; Signal-anchor for type II membrane protein span at residues 55–75 (WCMCFGLAFMLAGVILGGAYL). Over 76–266 (YKYFALQPDD…KFAVETLICS (191 aa)) the chain is Lumenal. Residues 102-134 (EPSADAPAARYQTIEENIKIFEEDAVEFISVPV) form a necessary for interaction with APP and inhibitor effects on APP processing region. The BRICHOS domain occupies 137 to 231 (FADSDPANIV…LCHDKETYKL (95 aa)). Disulfide bonds link C164/C223 and C248/C265. Residue N170 is glycosylated (N-linked (GlcNAc...) asparagine).

It belongs to the ITM2 family. As to quaternary structure, homodimer; disulfide-linked. Interacts with SPPL2A and SPPL2B. Interacts with APP. Mature BRI2 (mBRI2) interacts with the APP amyloid-beta A4 protein; the interaction occurs at the cell surface and in the endocytic compartments and enable alpha- and beta-secretase-induced APP cleavage inhibition. Mature BRI2 (mBRI2) interacts with the APP C99; the interaction occurs in the endocytic compartments and enable gamma-secretase-induced C99 cleavage inhibition. May form heterodimers with Bri23 peptide and APP amyloid-beta protein 40. Interacts with ADAM7 in sperm; the interaction increases following capacitation. Post-translationally, the ectodomain C-terminal part of the imBRI2 is processed by furin producing a secreted Bri23 peptide and a mature BRI2, membrane form (mBRI2). The remaining part of the ectodomain of mBRI2 containing the BRICHOS domain is cleaved by ADAM10 and is secreted (BRI2C, soluble form). The membrane-bound N-terminal fragment (BRI2C, membrane form) is further proteolytically processed by SPPL2A and SPPL2B through regulated intramembrane proteolysis producing a secreted C-peptide and a BRI2 intracellular domain (BRI2 ICD) released in the cytosol. Shedding by ADAM10 facilitates intramembrane cleavage but is not absolutely required for BRI2 ICD generation. Glycosylation at Asn-170 is important for cell surface localization, but doesn't affect furin- and ADAM10-induced proteolytic processing. Expressed in the brain, testis, testicular sperm, epididymis and mature epididymal sperm (at protein level).

The protein localises to the golgi apparatus membrane. Its subcellular location is the cell membrane. The protein resides in the endosome membrane. It localises to the secreted. Plays a regulatory role in the processing of the amyloid-beta A4 precursor protein (APP) and acts as an inhibitor of the amyloid-beta peptide aggregation and fibrils deposition. Plays a role in the induction of neurite outgrowth. Functions as a protease inhibitor by blocking access of secretases to APP cleavage sites. Functionally, mature BRI2 (mBRI2) functions as a modulator of the amyloid-beta A4 precursor protein (APP) processing leading to a strong reduction in the secretion of secretase-processed amyloid-beta protein 40 and amyloid-beta protein 42. In terms of biological role, bri23 peptide prevents aggregation of APP amyloid-beta protein 42 into toxic oligomers. This Mus musculus (Mouse) protein is Integral membrane protein 2B (Itm2b).